The sequence spans 610 residues: MIRAFSFPVSPERGRLRGWLEGSLAGLCELHWLRERQEYRVQQALRLAQPGMGGAEAEDEEDAEEDEDAAAARRAAAALEEQLEALPGLIWDLGQQLGDLSLESGGLDQESGRSSGFYEDPSSTGGPDSPPSTFCGDSGFSGSGSYGRLGPSDPRGIYASERPKSLGDASPSAPESVGARVAVPRSFSAPYPTAAAGAETCSSAERRARAGPFLTPSPLHAVALRSPRPSGRVPCGSPDGAASRPLDGYISALLRRRRRRGAGQPRTSPGGADGGARRQNGARPRPPEASPPPGGARPAREPSTERAWAAAWEAEVPPEPAPPAAASPPSSPAEGRLVKAQYIPGAPAASRGLPGRAARRRAPPLTRGRSVEQSPPRERPRAAGRRGRLAEPSGRRGSPRARKAARSQSETSLLGRAHAAPPPKYPTAERDEPRPPRPRRGPAPTPTVQACRRWRSTAEIDAPDGRRPRARVPAPRGPAPSPSAPPRRLLYGCAGSDSECSAVGRPVPLGRRMPSGCAPGGYGESESSASEGESPAFSSASSDSDGSGGLVWPQQLVAAAGASPSGPGGAAGGGTPAGPAKVFVKIKASHALKKKILRFRSGSLKVMTTV.

Position 6 is a phosphoserine (Ser-6). 3 disordered regions span residues 50–76 (PGMG…RRAA), 102–179 (LESG…SVGA), and 200–579 (TCSS…PAGP). Residues 56–69 (EAEDEEDAEEDEDA) are compositionally biased toward acidic residues. The stretch at 63 to 87 (AEEDEDAAAARRAAAALEEQLEALP) forms a coiled coil. Low complexity predominate over residues 120-138 (DPSSTGGPDSPPSTFCGDS). A phosphoserine mark is found at Ser-165 and Ser-237. Arg-255 bears the Omega-N-methylarginine mark. The span at 317–331 (PPEPAPPAAASPPSS) shows a compositional bias: pro residues. The segment covering 344 to 356 (PGAPAASRGLPGR) has biased composition (low complexity). Phosphoserine occurs at positions 409 and 456. Positions 475–485 (PRGPAPSPSAP) are enriched in pro residues. The segment covering 524-545 (ESESSASEGESPAFSSASSDSD) has biased composition (low complexity). Positions 566 to 576 (GPGGAAGGGTP) are enriched in gly residues. Positions 607–610 (MTTV) match the PDZ-binding motif.

Belongs to the dapper family. Can form homodimers and heterodimers with DACT1 or DACT3. Interacts with CSNK1D, PKA catalytic subunit, PKC-type kinase, DVL1, DVL2, DVL3, VANGL1, VANGL2 and CTNND1. Expressed in brain and uterus.

May be involved in regulation of intracellular signaling pathways during development. Specifically thought to play a role in canonical and/or non-canonical Wnt signaling pathways through interaction with DSH (Dishevelled) family proteins. In Mus musculus (Mouse), this protein is Dapper homolog 3 (Dact3).